The sequence spans 129 residues: MKLLGVLITIYCIASTLAIDVNVPSNGMADLNPVVNDGKSETEWTITTSANCHILLSCAVKGEESCDDVSIVTKDGDKERKLCPMATNSFTVQDFINEKVYVKIMTTGKDYKASCKAYSITNPKQPNQA.

Residues Met-1–Ala-18 form the signal peptide. A CUB domain is found at Ile-19–Thr-121. A disulfide bridge connects residues Cys-66 and Cys-83.

The protein belongs to the venom CUB family. Contains 2 disulfide bonds. In terms of tissue distribution, expressed by the venom gland.

It is found in the secreted. This chain is Venom CUB domain-containing protein 1, found in Platymeris rhadamanthus (Red spot assassin bug).